The sequence spans 116 residues: Spexin (116 aa).

An N-terminal signal peptide occupies residues 1 to 26 (MKGLRSLAATTLALFLVFVFLGNSSC). Positions 27-35 (APQRLLERR) are excised as a propeptide. A Glutamine amide modification is found at Gln49. 2 propeptides span residues 50–116 (GRRF…LLNW) and 74–116 (PNPQ…LLNW). Residues 55 to 73 (SDQSRRKDLSDRPLPERRS) show a composition bias toward basic and acidic residues. The segment at 55–77 (SDQSRRKDLSDRPLPERRSPNPQ) is disordered.

Belongs to the spexin family. In terms of tissue distribution, expressed in the type I glomic cells within the carotid body (at protein level). Expressed predominantly in pancreas, testis, kidney, brain and placenta. Expressed in submucosal layer of esophagus and stomach fundus.

The protein localises to the secreted. It localises to the extracellular space. It is found in the cytoplasmic vesicle. Its subcellular location is the secretory vesicle. Plays a role as a central modulator of cardiovascular and renal function and nociception. Also plays a role in energy metabolism and storage. Inhibits adrenocortical cell proliferation with minor stimulation on corticosteroid release. In terms of biological role, acts as a ligand for galanin receptors GALR2 and GALR3. Intracerebroventricular administration of the peptide induces an increase in arterial blood pressure, a decrease in both heart rate and renal excretion and delayed natriuresis. Intraventricular administration of the peptide induces antinociceptive activity. Also induces contraction of muscarinic-like stomach smooth muscles. Intraperitoneal administration of the peptide induces a reduction in food consumption and body weight. Inhibits long chain fatty acid uptake into adipocytes. Its function is as follows. Intracerebroventricular administration of the peptide induces a decrease in heart rate, but no change in arterial pressure, and an increase in urine flow rate. Intraventricular administration of the peptide induces antinociceptive activity. The chain is Spexin (SPX) from Homo sapiens (Human).